The sequence spans 665 residues: Cyclic nucleotide-gated cation channel subunit A (665 aa).

Topologically, residues 1–110 are cytoplasmic; that stretch reads MRHFKVKAMV…DPTLQSHYRW (110 aa). A helical transmembrane segment spans residues 111–131; that stretch reads LAIVSLAVLYNIIFVVGRAVF. Residues 132-138 lie on the Extracellular side of the membrane; the sequence is WEINKSA. A glycan (N-linked (GlcNAc...) asparagine) is linked at asparagine 135. Residues 139–159 traverse the membrane as a helical segment; sequence PAFWYTLDYLCDFIYLLDTLV. Residues 160-186 are Cytoplasmic-facing; sequence HMHEGFLDQGLLVRDAFRLRRHYFHTK. The chain crosses the membrane as a helical span at residues 187–207; it reads GWYLDVLSMLPTDLAYIWWPP. Residues 208 to 253 lie on the Extracellular side of the membrane; sequence ETCSSLYLPCPVIVRLNRLLRINRLWEWFDRTETATGYPNAFRICK. A helical transmembrane segment spans residues 254-274; sequence VVLAILVLIHWNACMYFAISY. At 275-325 the chain is on the cytoplasmic side; it reads EIGFSSDSWVYNLNGTRNNTLQRQYIYSFYWSTLTLTTIGETPTPENDVEY. A helical transmembrane segment spans residues 326 to 346; sequence LFVVADFLAGVLIFATIVGNI. The Extracellular portion of the chain corresponds to 347-481; it reads GSMISNMNVA…GKLSVVGDDG (135 aa). Residues 437 to 559, glutamate 496, and arginine 511 each bind 3',5'-cyclic GMP; that span reads LLEA…DGLL. Residues 482–502 form a helical membrane-spanning segment; the sequence is ITVLATLGAGSVFGEVSVLEI. The Cytoplasmic portion of the chain corresponds to 503 to 665; that stretch reads AGNRTGNRRT…SSDAAKQNTL (163 aa). The interval 633–665 is disordered; that stretch reads RSGRLYSLQPKRRPRSRPDATAKSSDAAKQNTL. The segment covering 654–665 has biased composition (polar residues); it reads AKSSDAAKQNTL.

This sequence belongs to the cyclic nucleotide-gated cation channel (TC 1.A.1.5) family. As to expression, expressed in antennae and the visual system.

It localises to the membrane. In terms of biological role, approximately 50-fold more sensitive to cGMP than to cAMP. May be involved in transduction cascades of both invertebrate photoreceptors and olfactory sensillae. This Drosophila melanogaster (Fruit fly) protein is Cyclic nucleotide-gated cation channel subunit A (CngA).